The primary structure comprises 243 residues: uncharacterized protein (243 aa).

This sequence belongs to the mycobacterial PPE family.

It localises to the cell membrane. This is an uncharacterized protein from Mycobacterium tuberculosis (strain CDC 1551 / Oshkosh).